Reading from the N-terminus, the 151-residue chain is Kinetoplast-associated protein 1 (151 aa).

The propeptide occupies 1 to 9 (MLRVSVRSL). Residues 13 to 151 (ASSKAGSKAA…KKGAAKKAHK (139 aa)) form a disordered region. 3 stretches are compositionally biased toward low complexity: residues 15 to 49 (SKAGSKAAVPAAAAAASAPLSPATSAASARAVPPV), 70 to 91 (AAAAPAKKAAAPKAAKAKTPAK), and 101 to 111 (SKPSAPKQAAG). Residues 112 to 151 (KMRKAAGKAQRKIKAAARKAAPKKMAKSFGKKGAAKKAHK) show a composition bias toward basic residues.

The protein belongs to the KAP family. Associates with the kinetoplast DNA network.

It is found in the mitochondrion matrix. Its subcellular location is the kinetoplast. Functionally, histone H1-like DNA-binding protein involved in the organization and segregation of kinetoplast DNA (kDNA). The mitochondrial DNA of kinetoplastid protozoa consists of about 5,000 minicircles and 20 to 30 maxicircles. These circular DNAs are held together by catenation into a highly organized compact disk structure referred to as a kinetoplast DNA (kDNA) network. Binds preferentially to a specific fragment of minicircle DNA and is able to compact kDNA networks through DNA charge neutralization and condensation. In Crithidia fasciculata, this protein is Kinetoplast-associated protein 1 (KAP4).